The chain runs to 206 residues: Small ribosomal subunit protein uS4 (206 aa).

An S4 RNA-binding domain is found at 96–158; sequence SRLDNVVYRM…AKKQSRIKAA (63 aa).

Belongs to the universal ribosomal protein uS4 family. In terms of assembly, part of the 30S ribosomal subunit. Contacts protein S5. The interaction surface between S4 and S5 is involved in control of translational fidelity.

In terms of biological role, one of the primary rRNA binding proteins, it binds directly to 16S rRNA where it nucleates assembly of the body of the 30S subunit. With S5 and S12 plays an important role in translational accuracy. The sequence is that of Small ribosomal subunit protein uS4 from Wigglesworthia glossinidia brevipalpis.